A 187-amino-acid polypeptide reads, in one-letter code: Calcium and integrin-binding family member 2 (187 aa).

EF-hand domains lie at 66 to 101 (RENP…LCES), 103 to 138 (PREL…LTKS), and 144 to 179 (EVVL…APDF). Ca(2+) contacts are provided by Asp116, Asn118, Asp120, Asp127, Asp157, Asp159, Asp161, Lys163, and Asp168.

As to quaternary structure, monomer. Homodimer. Interacts with WHRN and MYO7A. Interacts with ITGA2B (via C-terminus cytoplasmic tail region); the interactions are stabilized/increased in a calcium and magnesium-dependent manner. Interacts with ITGA7 (via C-terminus cytoplasmic tail region); the interactions are stabilized/increased in a calcium and magnesium-dependent manner. Interacts with TMC1. Interacts with TMC2.

Its subcellular location is the cytoplasm. It localises to the cell projection. It is found in the stereocilium. The protein resides in the photoreceptor inner segment. The protein localises to the cilium. Its subcellular location is the photoreceptor outer segment. It localises to the cell membrane. It is found in the sarcolemma. Functionally, calcium- and integrin-binding protein that plays a role in intracellular calcium homeostasis. Acts as an auxiliary subunit of the sensory mechanoelectrical transduction (MET) channel in hair cells. Essential for mechanoelectrical transduction (MET) currents in auditory hair cells and thereby required for hearing. Regulates the function of hair cell mechanotransduction by controlling the distribution of transmembrane channel-like proteins TMC1 and TMC2, and by regulating the function of the MET channels in hair cells. Required for the maintenance of auditory hair cell stereocilia bundle morphology and function and for hair-cell survival in the cochlea. Critical for proper photoreceptor cell maintenance and function. Plays a role in intracellular calcium homeostasis by decreasing ATP-induced calcium release. The protein is Calcium and integrin-binding family member 2 (Cib2) of Rattus norvegicus (Rat).